A 236-amino-acid polypeptide reads, in one-letter code: 2-C-methyl-D-erythritol 4-phosphate cytidylyltransferase (236 aa).

The protein belongs to the IspD/TarI cytidylyltransferase family. IspD subfamily.

The catalysed reaction is 2-C-methyl-D-erythritol 4-phosphate + CTP + H(+) = 4-CDP-2-C-methyl-D-erythritol + diphosphate. It participates in isoprenoid biosynthesis; isopentenyl diphosphate biosynthesis via DXP pathway; isopentenyl diphosphate from 1-deoxy-D-xylulose 5-phosphate: step 2/6. Catalyzes the formation of 4-diphosphocytidyl-2-C-methyl-D-erythritol from CTP and 2-C-methyl-D-erythritol 4-phosphate (MEP). This is 2-C-methyl-D-erythritol 4-phosphate cytidylyltransferase from Burkholderia vietnamiensis (strain G4 / LMG 22486) (Burkholderia cepacia (strain R1808)).